A 285-amino-acid chain; its full sequence is Guanylate kinase 2, chloroplastic/mitochondrial (285 aa).

Positions methionine 1–arginine 19 are enriched in low complexity. Residues methionine 1–methionine 42 constitute a chloroplast and mitochondrion transit peptide. The tract at residues methionine 1 to aspartate 66 is disordered. The segment covering serine 20–proline 36 has biased composition (pro residues). Over residues arginine 40–histidine 50 the composition is skewed to low complexity. The region spanning proline 91–aspartate 272 is the Guanylate kinase-like domain. Glycine 98–aspartate 105 contributes to the ATP binding site. Active-site residues include arginine 130, arginine 224, and arginine 235. Residue asparagine 255 participates in ATP binding.

It belongs to the guanylate kinase family. As to quaternary structure, monomer.

It localises to the plastid. It is found in the chloroplast. Its subcellular location is the mitochondrion. It catalyses the reaction GMP + ATP = GDP + ADP. Essential for recycling GMP and indirectly, cGMP. Essential for chloroplast differentiation at early stage of leaf development. May not be involved in the synthesis and maintenance of the organellar DNA during leaf development. The chain is Guanylate kinase 2, chloroplastic/mitochondrial (V2) from Oryza sativa subsp. japonica (Rice).